The following is a 243-amino-acid chain: Voltage-gated monoatomic cation channel TMEM109 (243 aa).

A signal peptide spans 1–33; that stretch reads MAGAHSNPSWSRHLFKAVLMVLGALLLVHSASA. Over 34 to 83 the chain is Lumenal; it reads QTHREFASPGQQKRESSADILTEIGRSLKETLDTWLGPETMHVISETLLQ. The chain crosses the membrane as a helical span at residues 84-104; that stretch reads VMWAISSAISVACFALSGIAA. Residues 105-135 are Cytoplasmic-facing; it reads QLLSALGLDGEQLTQVLKLSPSQVQTLLLWG. Residues 136-156 traverse the membrane as a helical segment; that stretch reads AAALVIYWLLSLLLGLVLALL. Residues 157–185 lie on the Lumenal side of the membrane; the sequence is GRILGGLKLVLFVAGFVGLVRSVPDPSTR. A helical membrane pass occupies residues 186 to 205; it reads ALLLLALLTVFALLSRLTGS. Residues 206-243 are Cytoplasmic-facing; that stretch reads RSSGTHLEAKVRGLERQIEELRGRQRRAAKIPRSMEEE.

As to quaternary structure, homooligomer. Interacts with CRYAB; in the cellular response to DNA damage.

Its subcellular location is the nucleus outer membrane. The protein localises to the endoplasmic reticulum membrane. The protein resides in the sarcoplasmic reticulum membrane. The enzyme catalyses K(+)(in) = K(+)(out). It catalyses the reaction Ca(2+)(in) = Ca(2+)(out). Functions as a voltage-gated monoatomic cation channel permeable to both potassium and calcium. Plays a role in the cellular response to DNA damage. This chain is Voltage-gated monoatomic cation channel TMEM109, found in Rattus norvegicus (Rat).